The chain runs to 148 residues: Deoxyuridine 5'-triphosphate nucleotidohydrolase (148 aa).

Substrate-binding positions include Arg67 to Gly69, Asn80, Leu84 to Asp86, and Met94.

The protein belongs to the dUTPase family. Requires Mg(2+) as cofactor.

The catalysed reaction is dUTP + H2O = dUMP + diphosphate + H(+). It participates in pyrimidine metabolism; dUMP biosynthesis; dUMP from dCTP (dUTP route): step 2/2. Its function is as follows. This enzyme is involved in nucleotide metabolism: it produces dUMP, the immediate precursor of thymidine nucleotides and it decreases the intracellular concentration of dUTP so that uracil cannot be incorporated into DNA. The protein is Deoxyuridine 5'-triphosphate nucleotidohydrolase of Paraburkholderia xenovorans (strain LB400).